Consider the following 175-residue polypeptide: NADH-ubiquinone oxidoreductase chain 6 (175 aa).

The next 5 helical transmembrane spans lie at 1–21, 25–45, 47–67, 88–108, and 149–169; these read MTMY…VGFS, SPIY…GIVL, FGGS…MLVV, TVFG…YYAL, and YGTW…VVIM.

Belongs to the complex I subunit 6 family. In terms of assembly, core subunit of respiratory chain NADH dehydrogenase (Complex I) which is composed of 45 different subunits.

It localises to the mitochondrion inner membrane. It carries out the reaction a ubiquinone + NADH + 5 H(+)(in) = a ubiquinol + NAD(+) + 4 H(+)(out). Core subunit of the mitochondrial membrane respiratory chain NADH dehydrogenase (Complex I) which catalyzes electron transfer from NADH through the respiratory chain, using ubiquinone as an electron acceptor. Essential for the catalytic activity and assembly of complex I. This is NADH-ubiquinone oxidoreductase chain 6 (MT-ND6) from Sus scrofa (Pig).